Reading from the N-terminus, the 197-residue chain is Recombination protein RecR (197 aa).

Residues 57 to 72 form a C4-type zinc finger; that stretch reads CSVCFALTEQNPCPIC. One can recognise a Toprim domain in the interval 79–174; it reads SVICVVETSQ…RVTRLAHGIP (96 aa).

This sequence belongs to the RecR family.

Its function is as follows. May play a role in DNA repair. It seems to be involved in an RecBC-independent recombinational process of DNA repair. It may act with RecF and RecO. The protein is Recombination protein RecR of Trichlorobacter lovleyi (strain ATCC BAA-1151 / DSM 17278 / SZ) (Geobacter lovleyi).